The following is a 175-amino-acid chain: Regenerating islet-derived protein 3-gamma (175 aa).

Residues 1–26 (MLPPMALPSVSWMLLSCLILLCQVQG) form the signal peptide. Residues 27-37 (EETQKELPSPR) constitute a propeptide that is removed on maturation. Intrachain disulfides connect cysteine 40–cysteine 51, cysteine 68–cysteine 171, and cysteine 146–cysteine 163. Residues 47–172 (YGSPCYALFL…CDAKLPYVCK (126 aa)) enclose the C-type lectin domain. A sufficient to activate EXTL3 region spans residues 103-118 (WIGLHDPTQGSEPDGD). Zn(2+) is bound at residue histidine 107. The EPN motif lies at 114 to 116 (EPD). Zn(2+) is bound by residues glutamate 121 and histidine 145.

Forms a hexameric membrane-permeabilizing oligomeric pore on membrane phospholipids. The hexamer is formed by three dimers related by helical symmetry. Forms filaments, filamentation traps pore complexes and limits damage to host cells. Interacts with EXTL3. Post-translationally, proteolytic processing by trypsin removes an inhibitory N-terminal propeptide and is essential for peptidoglycan binding and antibacterial activity. Predominantly expressed in pancreas, where it may be restricted to exocrine pancreas. Moderate expression levels in testis and weak in heart, kidney and placenta.

The protein resides in the secreted. Its subcellular location is the cytoplasm. Lipopolysaccharide inhibits pore-forming activity, explaining why is bactericidal for Gram-positive but not Gram-negative bacteria. Functionally, bactericidal C-type lectin which acts exclusively against Gram-positive bacteria and mediates bacterial killing by binding to surface-exposed carbohydrate moieties of peptidoglycan. Restricts bacterial colonization of the intestinal epithelial surface and consequently limits activation of adaptive immune responses by the microbiota. Acts as a hormone in response to different stimuli like anti-inflammatory signals, such as IL17A, or gut microbiome. Is secreted by different cell types to activate its receptor EXTL3 and induce cell specific signaling pathways. Induced by IL17A in keratinocytes, regulates keratinocyte proliferation and differentiation after skin injury. In parallel, inhibits skin inflammation through the inhibition of inflammatory cytokines such as IL6 and TNF. Induced by IL22 in lung epithelial cells, inhibits cytokine production and regulates allergic airway inflammation. Induced in small intestine by inulin-enriched diet and Lactobacillus gasseri enriched microbiome, plays a role in the improvement of gut barrier function, the regulation of energy balance and glucose levels. Modulates microbiota composition in duodenal contents. Produced by nociceptor in response to endotoxins, prevents endotoxic death by targeting kynurenine pathway in microglia. In terms of biological role, has bacteriostatic activity. Its function is as follows. Has bactericidal activity against L.monocytogenes and methicillin-resistant S.aureus. The chain is Regenerating islet-derived protein 3-gamma from Homo sapiens (Human).